We begin with the raw amino-acid sequence, 213 residues long: LexA repressor (213 aa).

The segment at residues 27–47 is a DNA-binding region (H-T-H motif); the sequence is QTEIARAFGFKGVRAAQYHLE. Active-site for autocatalytic cleavage activity residues include Ser-133 and Lys-170.

It belongs to the peptidase S24 family. As to quaternary structure, homodimer.

It carries out the reaction Hydrolysis of Ala-|-Gly bond in repressor LexA.. Represses a number of genes involved in the response to DNA damage (SOS response), including recA and lexA. In the presence of single-stranded DNA, RecA interacts with LexA causing an autocatalytic cleavage which disrupts the DNA-binding part of LexA, leading to derepression of the SOS regulon and eventually DNA repair. This is LexA repressor from Xanthomonas campestris.